The following is a 396-amino-acid chain: RNA polymerase principal sigma factor HrdA (396 aa).

Residues Met1 to Pro20 are compositionally biased toward basic residues. Residues Met1–Ser96 form a disordered region. 2 stretches are compositionally biased toward low complexity: residues Gln33 to Thr42 and Leu56 to Pro75. The Polymerase core binding motif lies at Asp187–Val200. Residues Leu357–Ser376 constitute a DNA-binding region (H-T-H motif).

Belongs to the sigma-70 factor family. Interacts transiently with the RNA polymerase catalytic core. Interacts with RNA polymerase-binding protein RbpA.

In terms of biological role, sigma factors are initiation factors that promote the attachment of RNA polymerase to specific initiation sites and are then released. In Streptomyces coelicolor (strain ATCC BAA-471 / A3(2) / M145), this protein is RNA polymerase principal sigma factor HrdA (hrdA).